Reading from the N-terminus, the 271-residue chain is Dihydropteroate synthase type-2 (271 aa).

A Pterin-binding domain is found at 1 to 259; that stretch reads MNKSLIIFGI…EPRPLRDGLA (259 aa). Asn12 contacts 4-aminobenzoate. 4 residues coordinate diphosphate: Asn12, Phe18, Ser51, and Ser52. Position 12 (Asn12) interacts with Mg(2+). 7,8-dihydropteroate-binding residues include Ser52, Asp85, Asn104, Asp174, Phe179, Lys213, and Ser214. The (7,8-dihydropterin-6-yl)methyl diphosphate site is built by Asp85, Asn104, and Asp174. 6-hydroxymethyl-7,8-dihydropterin contacts are provided by Asn104 and Asp174. Position 213 (Lys213) interacts with (7,8-dihydropterin-6-yl)methyl diphosphate. Lys213 serves as a coordination point for 6-hydroxymethyl-7,8-dihydropterin. Arg247 contacts 4-aminobenzoate. Diphosphate is bound by residues Arg247 and His249. 247–249 contributes to the (7,8-dihydropterin-6-yl)methyl diphosphate binding site; the sequence is RTH.

It belongs to the DHPS family. In terms of assembly, homodimer. The cofactor is Mg(2+).

It catalyses the reaction (7,8-dihydropterin-6-yl)methyl diphosphate + 4-aminobenzoate = 7,8-dihydropteroate + diphosphate. The protein operates within cofactor biosynthesis; tetrahydrofolate biosynthesis; 7,8-dihydrofolate from 2-amino-4-hydroxy-6-hydroxymethyl-7,8-dihydropteridine diphosphate and 4-aminobenzoate: step 1/2. In terms of biological role, catalyzes the condensation of para-aminobenzoate (pABA) with 6-hydroxymethyl-7,8-dihydropterin diphosphate (DHPt-PP) to form 7,8-dihydropteroate (H2Pte), the immediate precursor of folate derivatives. Confers resistance to sulfonamide antibiotics, including sulfamethoxazole (SMX), sulfadiazine and sulfisoxazole. The type II enzyme is stable whereas type I DHPS loses its activity rapidly. This chain is Dihydropteroate synthase type-2, found in Escherichia coli.